The chain runs to 696 residues: UvrABC system protein B (696 aa).

Residues 46–433 (EGVEDGLSFQ…SGQTAEQVVR (388 aa)) form the Helicase ATP-binding domain. 59 to 66 (GVTGSGKT) contributes to the ATP binding site. The short motif at 112–135 (YYDYYQPEAYVPQRDLFIEKDSSI) is the Beta-hairpin element. A Helicase C-terminal domain is found at 450 to 616 (QVDDVLSEIT…GVVKRIKDII (167 aa)). In terms of domain architecture, UVR spans 647–682 (AKEIKRLEKQMADYAKNLEFEKAAQTRDQLALLRER).

Belongs to the UvrB family. Forms a heterotetramer with UvrA during the search for lesions. Interacts with UvrC in an incision complex.

The protein localises to the cytoplasm. Functionally, the UvrABC repair system catalyzes the recognition and processing of DNA lesions. A damage recognition complex composed of 2 UvrA and 2 UvrB subunits scans DNA for abnormalities. Upon binding of the UvrA(2)B(2) complex to a putative damaged site, the DNA wraps around one UvrB monomer. DNA wrap is dependent on ATP binding by UvrB and probably causes local melting of the DNA helix, facilitating insertion of UvrB beta-hairpin between the DNA strands. Then UvrB probes one DNA strand for the presence of a lesion. If a lesion is found the UvrA subunits dissociate and the UvrB-DNA preincision complex is formed. This complex is subsequently bound by UvrC and the second UvrB is released. If no lesion is found, the DNA wraps around the other UvrB subunit that will check the other stand for damage. The polypeptide is UvrABC system protein B (Burkholderia mallei (strain ATCC 23344)).